Consider the following 213-residue polypeptide: Putative 3-methyladenine DNA glycosylase (213 aa).

Belongs to the DNA glycosylase MPG family.

In Leifsonia xyli subsp. xyli (strain CTCB07), this protein is Putative 3-methyladenine DNA glycosylase.